A 414-amino-acid chain; its full sequence is TAR DNA-binding protein 43 (414 aa).

RRM domains follow at residues 104-200 and 191-262; these read SDLI…RCTE and RKVF…NAEP. The segment covering 261 to 274 has biased composition (basic and acidic residues); that stretch reads EPKHNSNRQLERGG. Disordered regions lie at residues 261-303 and 341-373; these read EPKH…GNNQ and ASQQ…GNNS. The span at 275–303 shows a compositional bias: gly residues; sequence RFGGNPGGFGNQGGFGNSRGGGGGLGNNQ. Residues 342-373 show a composition bias toward low complexity; sequence SQQNQSGPSGNNQPQGNMQREQNQGFSSGNNS.

As to quaternary structure, homodimer.

Its subcellular location is the nucleus. It localises to the cytoplasm. The protein resides in the stress granule. The protein localises to the mitochondrion. In terms of biological role, probably involved in transcriptional repression. May play a role in the maintenance of the circadian clock periodicity. This chain is TAR DNA-binding protein 43 (TARDBP), found in Gallus gallus (Chicken).